The sequence spans 312 residues: Probable N-glycosylase/DNA lyase (312 aa).

Positions 1–22 (MRIPVGDFDLEMTQRSGQTSQP) are disordered. Positions 13–22 (TQRSGQTSQP) are enriched in polar residues. Residue K235 is part of the active site.

This sequence belongs to the type-1 OGG1 family.

It catalyses the reaction 2'-deoxyribonucleotide-(2'-deoxyribose 5'-phosphate)-2'-deoxyribonucleotide-DNA = a 3'-end 2'-deoxyribonucleotide-(2,3-dehydro-2,3-deoxyribose 5'-phosphate)-DNA + a 5'-end 5'-phospho-2'-deoxyribonucleoside-DNA + H(+). DNA repair enzyme that incises DNA at 8-oxoG residues. Excises 7,8-dihydro-8-oxoguanine and 2,6-diamino-4-hydroxy-5-N-methylformamidopyrimidine (FAPY) from damaged DNA. Has a beta-lyase activity that nicks DNA 3' to the lesion. This Methanothermobacter thermautotrophicus (strain ATCC 29096 / DSM 1053 / JCM 10044 / NBRC 100330 / Delta H) (Methanobacterium thermoautotrophicum) protein is Probable N-glycosylase/DNA lyase.